Here is a 175-residue protein sequence, read N- to C-terminus: Large ribosomal subunit protein uL15 (175 aa).

Disordered regions lie at residues 1–65 (MSTL…LPKF) and 155–175 (PESA…QPKA). A compositionally biased stretch (basic residues) spans 12-21 (RSWHRKKRVG). Residues 22–38 (RGQGSGLGKTAGRGGKG) show a composition bias toward gly residues. A compositionally biased stretch (low complexity) spans 160 to 169 (KAHAGKGVKA).

Belongs to the universal ribosomal protein uL15 family. Part of the 50S ribosomal subunit.

Its function is as follows. Binds to the 23S rRNA. The polypeptide is Large ribosomal subunit protein uL15 (Myxococcus xanthus (strain DK1622)).